Reading from the N-terminus, the 425-residue chain is CBS domain-containing protein CBSX6 (425 aa).

One can recognise a CBS 1 domain in the interval 16–90 (GKPEMVEFYE…FLAKTECLQE (75 aa)). A compositionally biased stretch (low complexity) spans 159–172 (SENSSSSSGLSADS). Residues 159–182 (SENSSSSSGLSADSTNRPTTSMTS) are disordered. The span at 173–182 (TNRPTTSMTS) shows a compositional bias: polar residues. Transmembrane regions (helical) follow at residues 200–220 (IGVLGALAPLPLTSISTLGII) and 275–295 (YLAAAWALANLYAGQFVMGVE). Residues 347–409 (MYRGRSAPLT…TAVTKQPSAF (63 aa)) form the CBS 2 domain.

Its subcellular location is the vacuole membrane. The chain is CBS domain-containing protein CBSX6 (CBSX6) from Arabidopsis thaliana (Mouse-ear cress).